Consider the following 266-residue polypeptide: Glucosamine-6-phosphate deaminase (266 aa).

Aspartate 72 acts as the Proton acceptor; for enolization step in catalysis. Catalysis depends on aspartate 141, which acts as the For ring-opening step. The active-site Proton acceptor; for ring-opening step is the histidine 143. Glutamate 148 acts as the For ring-opening step in catalysis.

It belongs to the glucosamine/galactosamine-6-phosphate isomerase family. NagB subfamily. As to quaternary structure, homohexamer.

It catalyses the reaction alpha-D-glucosamine 6-phosphate + H2O = beta-D-fructose 6-phosphate + NH4(+). It participates in amino-sugar metabolism; N-acetylneuraminate degradation; D-fructose 6-phosphate from N-acetylneuraminate: step 5/5. Its activity is regulated as follows. Allosterically activated by N-acetylglucosamine 6-phosphate (GlcNAc6P). Its function is as follows. Catalyzes the reversible isomerization-deamination of glucosamine 6-phosphate (GlcN6P) to form fructose 6-phosphate (Fru6P) and ammonium ion. In Yersinia pestis bv. Antiqua (strain Antiqua), this protein is Glucosamine-6-phosphate deaminase.